We begin with the raw amino-acid sequence, 234 residues long: MKIIRVQDQIEGGKIAFTLLKDSLAKGAKTLGLATGSSPISFYQEMVKSPLDFSDLTSINLDEYVGLSVESDQSYDYFMRQNLFNAKPFKKNYLPNGLATDVEAEAKRYNQIIAEHPIDFQVLGIGRNGHIGFNEPGTSFEEETHVVDLQESTIEANSRFFTSIEDVPKQAISMGIASIMKSEMIVLLAFGQEKADAIKGMVFGPITEHLPASILQKHDHVIVIVDEAAASQLD.

Aspartate 62 (proton acceptor; for enolization step) is an active-site residue. The For ring-opening step role is filled by asparagine 128. The active-site Proton acceptor; for ring-opening step is the histidine 130. Glutamate 135 (for ring-opening step) is an active-site residue.

The protein belongs to the glucosamine/galactosamine-6-phosphate isomerase family. NagB subfamily.

The enzyme catalyses alpha-D-glucosamine 6-phosphate + H2O = beta-D-fructose 6-phosphate + NH4(+). It functions in the pathway amino-sugar metabolism; N-acetylneuraminate degradation; D-fructose 6-phosphate from N-acetylneuraminate: step 5/5. In terms of biological role, catalyzes the reversible isomerization-deamination of glucosamine 6-phosphate (GlcN6P) to form fructose 6-phosphate (Fru6P) and ammonium ion. The sequence is that of Glucosamine-6-phosphate deaminase from Streptococcus pyogenes serotype M1.